The sequence spans 224 residues: PKHD-type hydroxylase Shewmr4_3244 (224 aa).

The region spanning 78 to 176 (QFYPPLFNRY…RTAAFMWLQS (99 aa)) is the Fe2OG dioxygenase domain. Positions 96, 98, and 157 each coordinate Fe cation. Arginine 167 is a binding site for 2-oxoglutarate.

Fe(2+) is required as a cofactor. L-ascorbate serves as cofactor.

The protein is PKHD-type hydroxylase Shewmr4_3244 of Shewanella sp. (strain MR-4).